The sequence spans 265 residues: Cytochrome c oxidase subunit 3 (265 aa).

7 helical membrane-spanning segments follow: residues 16–36 (PWPL…VMYM), 41–61 (GGGT…FVWW), 85–105 (GIIL…WAFF), 138–158 (LILL…LAGL), 162–182 (AVYA…FQGI), 200–220 (FFLA…FLII), and 242–262 (AFYW…IYWW).

The protein belongs to the cytochrome c oxidase subunit 3 family. Component of the cytochrome c oxidase (complex IV, CIV), a multisubunit enzyme composed of a catalytic core of 3 subunits and several supernumerary subunits. The complex exists as a monomer or a dimer and forms supercomplexes (SCs) in the inner mitochondrial membrane with ubiquinol-cytochrome c oxidoreductase (cytochrome b-c1 complex, complex III, CIII).

Its subcellular location is the mitochondrion inner membrane. It catalyses the reaction 4 Fe(II)-[cytochrome c] + O2 + 8 H(+)(in) = 4 Fe(III)-[cytochrome c] + 2 H2O + 4 H(+)(out). Its function is as follows. Component of the cytochrome c oxidase, the last enzyme in the mitochondrial electron transport chain which drives oxidative phosphorylation. The respiratory chain contains 3 multisubunit complexes succinate dehydrogenase (complex II, CII), ubiquinol-cytochrome c oxidoreductase (cytochrome b-c1 complex, complex III, CIII) and cytochrome c oxidase (complex IV, CIV), that cooperate to transfer electrons derived from NADH and succinate to molecular oxygen, creating an electrochemical gradient over the inner membrane that drives transmembrane transport and the ATP synthase. Cytochrome c oxidase is the component of the respiratory chain that catalyzes the reduction of oxygen to water. Electrons originating from reduced cytochrome c in the intermembrane space (IMS) are transferred via the dinuclear copper A center (CU(A)) of subunit 2 and heme A of subunit 1 to the active site in subunit 1, a binuclear center (BNC) formed by heme A3 and copper B (CU(B)). The BNC reduces molecular oxygen to 2 water molecules using 4 electrons from cytochrome c in the IMS and 4 protons from the mitochondrial matrix. This chain is Cytochrome c oxidase subunit 3 (COX3), found in Marchantia polymorpha (Common liverwort).